A 692-amino-acid polypeptide reads, in one-letter code: Elongation factor G (692 aa).

A tr-type G domain is found at 8 to 283; it reads EDYRNFGIMA…AVVDYLPSPV (276 aa). GTP-binding positions include 17–24, 81–85, and 135–138; these read AHIDAGKT, DTPGH, and NKMD.

It belongs to the TRAFAC class translation factor GTPase superfamily. Classic translation factor GTPase family. EF-G/EF-2 subfamily.

Its subcellular location is the cytoplasm. Catalyzes the GTP-dependent ribosomal translocation step during translation elongation. During this step, the ribosome changes from the pre-translocational (PRE) to the post-translocational (POST) state as the newly formed A-site-bound peptidyl-tRNA and P-site-bound deacylated tRNA move to the P and E sites, respectively. Catalyzes the coordinated movement of the two tRNA molecules, the mRNA and conformational changes in the ribosome. The polypeptide is Elongation factor G (Caulobacter vibrioides (strain ATCC 19089 / CIP 103742 / CB 15) (Caulobacter crescentus)).